Reading from the N-terminus, the 172-residue chain is Keratin-associated protein 13-3 (172 aa).

5 consecutive repeat copies span residues 46–55, 56–65, 66–75, 76–85, and 92–101. The tract at residues 46 to 101 is 5 X 10 AA approximate repeats; sequence CQLGSSLYRGCQETCWRPNSCQTLCVESSPCHTSCYYPRTHMLCNSCLTMHVGSRG.

This sequence belongs to the PMG family. In terms of assembly, interacts with hair keratins.

Functionally, in the hair cortex, hair keratin intermediate filaments are embedded in an interfilamentous matrix, consisting of hair keratin-associated proteins (KRTAP), which are essential for the formation of a rigid and resistant hair shaft through their extensive disulfide bond cross-linking with abundant cysteine residues of hair keratins. The matrix proteins include the high-sulfur and high-glycine-tyrosine keratins. The protein is Keratin-associated protein 13-3 (KRTAP13-3) of Homo sapiens (Human).